The chain runs to 357 residues: Acyl-CoA Delta12-desaturase (357 aa).

Helical transmembrane passes span 49–69 (VLWFVLLHAGALYGVYLIFAS) and 72–92 (IYTTLYGFLLCELSLLSITAG). Residues H94, H99, H131, H134, and H135 each coordinate Fe cation. Positions 94-99 (HRLWAH) match the Histidine box-1 motif. Residues 131–135 (HRVHH) carry the Histidine box-2 motif. Helical transmembrane passes span 195-215 (LVPFVSFVIPTLIPMYFWGET) and 223-245 (STMFRYCLSLNLTWLVNSAAHMW). Residues H243, H272, H275, and H276 each contribute to the Fe cation site. A Histidine box-3 motif is present at residues 272–276 (HNFHH).

This sequence belongs to the fatty acid desaturase type 1 family. The cofactor is Fe(2+).

Its subcellular location is the membrane. It carries out the reaction (9Z)-octadecenoyl-CoA + 2 Fe(II)-[cytochrome b5] + O2 + 2 H(+) = (9Z,12Z)-octadecadienoyl-CoA + 2 Fe(III)-[cytochrome b5] + 2 H2O. The catalysed reaction is (9Z)-hexadecenoyl-CoA + 2 Fe(II)-[cytochrome b5] + O2 + 2 H(+) = (9Z,12Z)-hexadecadienoyl-CoA + 2 Fe(III)-[cytochrome b5] + 2 H2O. It catalyses the reaction hexadecanoyl-CoA + 2 Fe(II)-[cytochrome b5] + O2 + 2 H(+) = (9Z)-hexadecenoyl-CoA + 2 Fe(III)-[cytochrome b5] + 2 H2O. Functionally, catalyzes the formation of a Delta12 double bond, acting on monounsaturated fatty acyl substrates like palmitoleoyl-CoA ((9Z)-hexadecenoyl-CoA) and oleoyl-CoA ((9Z)-octadecenoyl-CoA) with higher desaturation activity on (9Z)-octadecenoyl-CoA than (9Z)-hexadecenoyl-CoA. Requires preexisting cis double bond at the Delta9 position of fatty acyls to be able to insert the Delta12 double bond. Delta12-desaturation of (9Z)-octadecenoyl-CoA in insects produces (9Z,12Z)-octadecadienoyl-CoA (linoleoyl-CoA) which may be used to supply precursors of crucial mediators of immunity and reproduction and other essential functions. Can also catalyze Delta9-desaturation on saturated fatty acyl substrates like palmitoyl-CoA (hexadecanoyl-CoA) but with lower efficiency. The polypeptide is Acyl-CoA Delta12-desaturase (Acheta domesticus (House cricket)).